Consider the following 273-residue polypeptide: Putative phosphoenolpyruvate synthase regulatory protein (273 aa).

Residue 153 to 160 (GVSRSGKT) participates in ADP binding.

This sequence belongs to the pyruvate, phosphate/water dikinase regulatory protein family. PSRP subfamily.

The enzyme catalyses [pyruvate, water dikinase] + ADP = [pyruvate, water dikinase]-phosphate + AMP + H(+). It catalyses the reaction [pyruvate, water dikinase]-phosphate + phosphate + H(+) = [pyruvate, water dikinase] + diphosphate. Its function is as follows. Bifunctional serine/threonine kinase and phosphorylase involved in the regulation of the phosphoenolpyruvate synthase (PEPS) by catalyzing its phosphorylation/dephosphorylation. This chain is Putative phosphoenolpyruvate synthase regulatory protein, found in Polaromonas naphthalenivorans (strain CJ2).